The sequence spans 440 residues: Ribulose bisphosphate carboxylase large chain (440 aa).

An N6,N6,N6-trimethyllysine modification is found at K4. The substrate site is built by N113 and T163. K165 serves as the catalytic Proton acceptor. K167 contributes to the substrate binding site. Residues K191, D193, and E194 each coordinate Mg(2+). Position 191 is an N6-carboxylysine (K191). H284 functions as the Proton acceptor in the catalytic mechanism. Substrate contacts are provided by R285, H317, and S369.

The protein belongs to the RuBisCO large chain family. Type I subfamily. In terms of assembly, heterohexadecamer of 8 large chains and 8 small chains; disulfide-linked. The disulfide link is formed within the large subunit homodimers. Mg(2+) serves as cofactor. In terms of processing, the disulfide bond which can form in the large chain dimeric partners within the hexadecamer appears to be associated with oxidative stress and protein turnover.

Its subcellular location is the plastid. The protein localises to the chloroplast. The enzyme catalyses 2 (2R)-3-phosphoglycerate + 2 H(+) = D-ribulose 1,5-bisphosphate + CO2 + H2O. It carries out the reaction D-ribulose 1,5-bisphosphate + O2 = 2-phosphoglycolate + (2R)-3-phosphoglycerate + 2 H(+). Its function is as follows. RuBisCO catalyzes two reactions: the carboxylation of D-ribulose 1,5-bisphosphate, the primary event in carbon dioxide fixation, as well as the oxidative fragmentation of the pentose substrate in the photorespiration process. Both reactions occur simultaneously and in competition at the same active site. The sequence is that of Ribulose bisphosphate carboxylase large chain from Ptychomitrium gardneri (Gardner's ptychomitrium moss).